Consider the following 196-residue polypeptide: Putative AAA family ATPase L572 (196 aa).

Residue 32 to 39 (NAVNCKET) participates in ATP binding.

It belongs to the AAA ATPase family.

This is Putative AAA family ATPase L572 from Acanthamoeba polyphaga mimivirus (APMV).